Consider the following 246-residue polypeptide: Ribosomal RNA small subunit methyltransferase J (246 aa).

S-adenosyl-L-methionine is bound by residues 115 to 116 (ER) and Asp169.

It belongs to the methyltransferase superfamily. RsmJ family.

It localises to the cytoplasm. It catalyses the reaction guanosine(1516) in 16S rRNA + S-adenosyl-L-methionine = N(2)-methylguanosine(1516) in 16S rRNA + S-adenosyl-L-homocysteine + H(+). Functionally, specifically methylates the guanosine in position 1516 of 16S rRNA. This chain is Ribosomal RNA small subunit methyltransferase J, found in Buchnera aphidicola subsp. Acyrthosiphon pisum (strain 5A).